We begin with the raw amino-acid sequence, 122 residues long: Small ribosomal subunit protein uS13 (122 aa).

The tract at residues 95 to 122 is disordered; it reads GLPVRGQRTHTNARTRKGPAKPIAGKKK.

It belongs to the universal ribosomal protein uS13 family. In terms of assembly, part of the 30S ribosomal subunit. Forms a loose heterodimer with protein S19. Forms two bridges to the 50S subunit in the 70S ribosome.

Functionally, located at the top of the head of the 30S subunit, it contacts several helices of the 16S rRNA. In the 70S ribosome it contacts the 23S rRNA (bridge B1a) and protein L5 of the 50S subunit (bridge B1b), connecting the 2 subunits; these bridges are implicated in subunit movement. Contacts the tRNAs in the A and P-sites. This Caulobacter sp. (strain K31) protein is Small ribosomal subunit protein uS13.